Reading from the N-terminus, the 358-residue chain is Fructose-bisphosphate aldolase (358 aa).

Residue Ser61 coordinates D-glyceraldehyde 3-phosphate. Asp108 functions as the Proton donor in the catalytic mechanism. Zn(2+) is bound by residues His109, Asp143, Glu173, and His225. Residue Gly226 coordinates dihydroxyacetone phosphate. A Zn(2+)-binding site is contributed by His264. Dihydroxyacetone phosphate contacts are provided by residues 265 to 267 (GGS) and 286 to 289 (NIDT). Thr289, Thr312, Thr340, and Thr342 each carry phosphothreonine.

Belongs to the class II fructose-bisphosphate aldolase family. As to quaternary structure, homodimer. It depends on Zn(2+) as a cofactor.

The enzyme catalyses beta-D-fructose 1,6-bisphosphate = D-glyceraldehyde 3-phosphate + dihydroxyacetone phosphate. It functions in the pathway carbohydrate degradation; glycolysis; D-glyceraldehyde 3-phosphate and glycerone phosphate from D-glucose: step 4/4. Catalyzes the aldol condensation of dihydroxyacetone phosphate (DHAP or glycerone-phosphate) with glyceraldehyde 3-phosphate (G3P) to form fructose 1,6-bisphosphate (FBP) in gluconeogenesis and the reverse reaction in glycolysis. In Schizosaccharomyces pombe (strain 972 / ATCC 24843) (Fission yeast), this protein is Fructose-bisphosphate aldolase (fba1).